The following is a 519-amino-acid chain: Ubiquitin carboxyl-terminal hydrolase 30 (519 aa).

Residues 1–52 (MSWAPVSTWSRRTPLAACCSAPELPPAGAWKACAAGSLRIGPQGRCKMMKNW) lie on the Mitochondrial intermembrane side of the membrane. A helical transmembrane segment spans residues 53–73 (GMIGGIAAALAAGIYVLWGPI). Residues 74–519 (SDRKKYRKGL…HPEDQRAAEK (446 aa)) are Cytoplasmic-facing. In terms of domain architecture, USP spans 85-504 (PGLLNLGNTC…SAYLLFYERI (420 aa)). The Nucleophile role is filled by C94. The segment at 379 to 405 (SKQPANHLSAAEQETTDGKEGGAQNPT) is disordered. The active-site Proton acceptor is the H455.

The protein belongs to the peptidase C19 family.

It is found in the mitochondrion outer membrane. The catalysed reaction is Thiol-dependent hydrolysis of ester, thioester, amide, peptide and isopeptide bonds formed by the C-terminal Gly of ubiquitin (a 76-residue protein attached to proteins as an intracellular targeting signal).. Its function is as follows. Deubiquitinating enzyme that acts as a key inhibitor of mitophagy by counteracting the action of parkin (PRKN). The protein is Ubiquitin carboxyl-terminal hydrolase 30 (usp30) of Xenopus tropicalis (Western clawed frog).